The following is a 354-amino-acid chain: Guanine nucleotide-binding protein G(t) subunit alpha-2 (354 aa).

Positions 1 to 27 (MGSGASAEDKELAKRSKELEKKLQEDA) are disordered. G2 carries the N-myristoyl glycine lipid modification. The span at 7-27 (AEDKELAKRSKELEKKLQEDA) shows a compositional bias: basic and acidic residues. Residues 32–354 (KTVKLLLLGA…KENLKDCGLF (323 aa)) enclose the G-alpha domain. The tract at residues 35-48 (KLLLLGAGESGKST) is G1 motif. GTP-binding positions include 40–47 (GAGESGKS), 175–181 (LRSRVKT), 200–204 (DVGGQ), 269–272 (NKKD), and A326. S47 contributes to the Mg(2+) binding site. Residues 173–181 (DVLRSRVKT) are G2 motif. An ADP-ribosylarginine; by cholera toxin modification is found at R178. Position 181 (T181) interacts with Mg(2+). The G3 motif stretch occupies residues 196–205 (FRMFDVGGQR). The tract at residues 265–272 (VLFLNKKD) is G4 motif. Residues 324–329 (TCATDT) are G5 motif. At C351 the chain carries ADP-ribosylcysteine; by pertussis toxin.

Belongs to the G-alpha family. G(i/o/t/z) subfamily. In terms of assembly, g proteins are composed of 3 units; alpha, beta and gamma. The alpha chain contains the guanine nucleotide binding site. In terms of tissue distribution, retinal rod outer segment.

It localises to the cell projection. It is found in the cilium. The protein resides in the photoreceptor outer segment. Its subcellular location is the photoreceptor inner segment. In terms of biological role, guanine nucleotide-binding proteins (G proteins) are involved as modulators or transducers in various transmembrane signaling systems. Transducin is an amplifier and one of the transducers of a visual impulse that performs the coupling between rhodopsin and cGMP-phosphodiesterase. The polypeptide is Guanine nucleotide-binding protein G(t) subunit alpha-2 (GNAT2) (Homo sapiens (Human)).